Consider the following 89-residue polypeptide: Small ribosomal subunit protein uS15 (89 aa).

The protein belongs to the universal ribosomal protein uS15 family. As to quaternary structure, part of the 30S ribosomal subunit. Forms a bridge to the 50S subunit in the 70S ribosome, contacting the 23S rRNA.

One of the primary rRNA binding proteins, it binds directly to 16S rRNA where it helps nucleate assembly of the platform of the 30S subunit by binding and bridging several RNA helices of the 16S rRNA. Its function is as follows. Forms an intersubunit bridge (bridge B4) with the 23S rRNA of the 50S subunit in the ribosome. The polypeptide is Small ribosomal subunit protein uS15 (Methylobacterium nodulans (strain LMG 21967 / CNCM I-2342 / ORS 2060)).